The chain runs to 685 residues: Methionine--tRNA ligase (685 aa).

Zn(2+) contacts are provided by Cys-142, Cys-145, Cys-155, and Cys-158. The 'KMSKS' region signature appears at 330–334 (KMSKS). An ATP-binding site is contributed by Lys-333. Residues 584-685 (DFIKVDLRVA…SGAKPGDKVS (102 aa)) enclose the tRNA-binding domain.

The protein belongs to the class-I aminoacyl-tRNA synthetase family. MetG type 1 subfamily. Homodimer. It depends on Zn(2+) as a cofactor.

It localises to the cytoplasm. It catalyses the reaction tRNA(Met) + L-methionine + ATP = L-methionyl-tRNA(Met) + AMP + diphosphate. Its function is as follows. Is required not only for elongation of protein synthesis but also for the initiation of all mRNA translation through initiator tRNA(fMet) aminoacylation. The polypeptide is Methionine--tRNA ligase (Acinetobacter baylyi (strain ATCC 33305 / BD413 / ADP1)).